The following is a 284-amino-acid chain: 4-diphosphocytidyl-2-C-methyl-D-erythritol kinase (284 aa).

The active site involves K14. 98-108 serves as a coordination point for ATP; that stretch reads PMGGGLGGGSS. The active site involves D140.

It belongs to the GHMP kinase family. IspE subfamily.

The enzyme catalyses 4-CDP-2-C-methyl-D-erythritol + ATP = 4-CDP-2-C-methyl-D-erythritol 2-phosphate + ADP + H(+). Its pathway is isoprenoid biosynthesis; isopentenyl diphosphate biosynthesis via DXP pathway; isopentenyl diphosphate from 1-deoxy-D-xylulose 5-phosphate: step 3/6. Its function is as follows. Catalyzes the phosphorylation of the position 2 hydroxy group of 4-diphosphocytidyl-2C-methyl-D-erythritol. The chain is 4-diphosphocytidyl-2-C-methyl-D-erythritol kinase from Shewanella baltica (strain OS155 / ATCC BAA-1091).